We begin with the raw amino-acid sequence, 376 residues long: Probable tRNA sulfurtransferase (376 aa).

The THUMP domain maps to 51 to 152; that stretch reads EENLKNLKYV…KNSVYVFDKS (102 aa). Residues 170 to 171, 195 to 196, arginine 252, glycine 274, and glutamine 283 contribute to the ATP site; these read LI and TF.

Belongs to the ThiI family.

It is found in the cytoplasm. It carries out the reaction [ThiI sulfur-carrier protein]-S-sulfanyl-L-cysteine + a uridine in tRNA + 2 reduced [2Fe-2S]-[ferredoxin] + ATP + H(+) = [ThiI sulfur-carrier protein]-L-cysteine + a 4-thiouridine in tRNA + 2 oxidized [2Fe-2S]-[ferredoxin] + AMP + diphosphate. It catalyses the reaction [ThiS sulfur-carrier protein]-C-terminal Gly-Gly-AMP + S-sulfanyl-L-cysteinyl-[cysteine desulfurase] + AH2 = [ThiS sulfur-carrier protein]-C-terminal-Gly-aminoethanethioate + L-cysteinyl-[cysteine desulfurase] + A + AMP + 2 H(+). Its pathway is cofactor biosynthesis; thiamine diphosphate biosynthesis. Functionally, catalyzes the ATP-dependent transfer of a sulfur to tRNA to produce 4-thiouridine in position 8 of tRNAs, which functions as a near-UV photosensor. Also catalyzes the transfer of sulfur to the sulfur carrier protein ThiS, forming ThiS-thiocarboxylate. This is a step in the synthesis of thiazole, in the thiamine biosynthesis pathway. The sulfur is donated as persulfide by IscS. This Mycoplasmopsis synoviae (strain 53) (Mycoplasma synoviae) protein is Probable tRNA sulfurtransferase.